The sequence spans 231 residues: 7-cyano-7-deazaguanine synthase (231 aa).

8 to 18 (FSGGQDSTTCL) lines the ATP pocket. Zn(2+) contacts are provided by Cys188, Cys197, Cys200, and Cys203.

The protein belongs to the QueC family. The cofactor is Zn(2+).

It catalyses the reaction 7-carboxy-7-deazaguanine + NH4(+) + ATP = 7-cyano-7-deazaguanine + ADP + phosphate + H2O + H(+). Its pathway is purine metabolism; 7-cyano-7-deazaguanine biosynthesis. Functionally, catalyzes the ATP-dependent conversion of 7-carboxy-7-deazaguanine (CDG) to 7-cyano-7-deazaguanine (preQ(0)). This Escherichia coli O127:H6 (strain E2348/69 / EPEC) protein is 7-cyano-7-deazaguanine synthase.